The following is an 88-amino-acid chain: Small ribosomal subunit protein bS20 (88 aa).

The tract at residues 1–27 (MANTKQAQKRARQAEQRRQHNASQRSM) is disordered.

This sequence belongs to the bacterial ribosomal protein bS20 family.

Its function is as follows. Binds directly to 16S ribosomal RNA. The protein is Small ribosomal subunit protein bS20 of Chromohalobacter salexigens (strain ATCC BAA-138 / DSM 3043 / CIP 106854 / NCIMB 13768 / 1H11).